Here is a 318-residue protein sequence, read N- to C-terminus: Porphobilinogen deaminase (318 aa).

Cys-241 carries the S-(dipyrrolylmethanemethyl)cysteine modification.

It belongs to the HMBS family. Monomer. The cofactor is dipyrromethane.

It catalyses the reaction 4 porphobilinogen + H2O = hydroxymethylbilane + 4 NH4(+). It functions in the pathway porphyrin-containing compound metabolism; protoporphyrin-IX biosynthesis; coproporphyrinogen-III from 5-aminolevulinate: step 2/4. In terms of biological role, tetrapolymerization of the monopyrrole PBG into the hydroxymethylbilane pre-uroporphyrinogen in several discrete steps. The chain is Porphobilinogen deaminase from Geobacter sp. (strain M21).